A 160-amino-acid chain; its full sequence is Ribosomal RNA large subunit methyltransferase H (160 aa).

S-adenosyl-L-methionine contacts are provided by residues leucine 77, glycine 109, and 128–133 (FSRLTF).

The protein belongs to the RNA methyltransferase RlmH family. Homodimer.

It localises to the cytoplasm. The enzyme catalyses pseudouridine(1915) in 23S rRNA + S-adenosyl-L-methionine = N(3)-methylpseudouridine(1915) in 23S rRNA + S-adenosyl-L-homocysteine + H(+). Specifically methylates the pseudouridine at position 1915 (m3Psi1915) in 23S rRNA. This is Ribosomal RNA large subunit methyltransferase H from Desulfitobacterium hafniense (strain Y51).